Here is a 781-residue protein sequence, read N- to C-terminus: Translation initiation factor IF-2 (781 aa).

Residues 44 to 195 (RQLDNAVDGT…TPPKPKELPE (152 aa)) are disordered. Basic and acidic residues predominate over residues 53–65 (TNKKAEAPKKETT). Polar residues predominate over residues 66–81 (SNENGNSKGPNKPNMT). Positions 82–93 (NSNEKSNKPNKP) are enriched in low complexity. A compositionally biased stretch (polar residues) spans 115-126 (KPANTGNQTQAS). The segment covering 127–169 (GNQQAGGQKRNNNNNSNRPGGGNPNRPGGNNRPNRGGNFNNKG) has biased composition (low complexity). The tr-type G domain occupies 282 to 451 (ERPPVVTIMG…LLVSEVEELK (170 aa)). The G1 stretch occupies residues 291–298 (GHVDHGKT). 291 to 298 (GHVDHGKT) serves as a coordination point for GTP. The segment at 316-320 (GITQH) is G2. The interval 337–340 (DTPG) is G3. Residues 337–341 (DTPGH) and 391–394 (NKID) each bind GTP. The segment at 391–394 (NKID) is G4. The G5 stretch occupies residues 427–429 (SAK).

This sequence belongs to the TRAFAC class translation factor GTPase superfamily. Classic translation factor GTPase family. IF-2 subfamily.

It is found in the cytoplasm. Functionally, one of the essential components for the initiation of protein synthesis. Protects formylmethionyl-tRNA from spontaneous hydrolysis and promotes its binding to the 30S ribosomal subunits. Also involved in the hydrolysis of GTP during the formation of the 70S ribosomal complex. This is Translation initiation factor IF-2 from Listeria monocytogenes serotype 4a (strain HCC23).